A 102-amino-acid chain; its full sequence is snRNA-activating protein complex subunit 5 (102 aa).

Positions 73–82 are enriched in polar residues; the sequence is QTTLKLSTRS. Positions 73-102 are disordered; the sequence is QTTLKLSTRSPMEEEEEEEEEEEEEEESDS. The span at 85 to 102 shows a compositional bias: acidic residues; it reads EEEEEEEEEEEEEEESDS.

As to quaternary structure, part of the SNAPc complex composed of 5 subunits: SNAPC1, SNAPC2, SNAPC3, SNAPC4 and SNAPC5. SNAPC5 interacts with SNAPC4.

It is found in the nucleus. Functionally, part of the SNAPc complex required for the transcription of both RNA polymerase II and III small-nuclear RNA genes. Binds to the proximal sequence element (PSE), a non-TATA-box basal promoter element common to these 2 types of genes. Recruits TBP and BRF2 to the U6 snRNA TATA box. This is snRNA-activating protein complex subunit 5 from Mus musculus (Mouse).